Here is a 21-residue protein sequence, read N- to C-terminus: Venom peptide Tv1 (21 aa).

3 cysteine pairs are disulfide-bonded: C4-C20, C5-C21, and C7-C16.

As to expression, expressed by the salivary gland. This peptide is considered as a venom peptide.

It localises to the secreted. Its function is as follows. Injections of 20 uM of this synthetic peptide (Ile) causes partial paralysis to polychaete worms (Nereis virens), the natural prey of terebrid snails. This paralysis may be due to an inhibition of nicotinic receptors at the neuromuscular junction. The chain is Venom peptide Tv1 from Terebra variegata (Variegate auger snail).